Reading from the N-terminus, the 419-residue chain is rRNA methyltransferase 3, mitochondrial (419 aa).

A mitochondrion-targeting transit peptide spans 1-39 (MAALCGGMLRGCILKPLGLSGSLQLKRNVRALRRTPVRV). The interval 42 to 68 (ADEEGRERKQVEASRQRQPRQNESQAC) is disordered. Residues 44–56 (EEGRERKQVEASR) are compositionally biased toward basic and acidic residues. S-adenosyl-L-methionine is bound by residues Gly-357, Ile-381, and Leu-390.

The protein belongs to the class IV-like SAM-binding methyltransferase superfamily. RNA methyltransferase TrmH family.

It localises to the mitochondrion. It catalyses the reaction a uridine in rRNA + S-adenosyl-L-methionine = a 2'-O-methyluridine in rRNA + S-adenosyl-L-homocysteine + H(+). In terms of biological role, S-adenosyl-L-methionine-dependent 2'-O-ribose methyltransferase that catalyzes the formation of 2'-O-methylguanosine at position 1370 (Gm1370) in the mitochondrial large subunit ribosomal RNA (mtLSU rRNA), a conserved modification in the peptidyl transferase domain of the mtLSU rRNA. Also required for formation of 2'-O-methyluridine at position 1369 (Um1369) mediated by MRM2. The protein is rRNA methyltransferase 3, mitochondrial of Xenopus laevis (African clawed frog).